A 121-amino-acid chain; its full sequence is Ribosome-binding factor A (121 aa).

It belongs to the RbfA family. As to quaternary structure, monomer. Binds 30S ribosomal subunits, but not 50S ribosomal subunits or 70S ribosomes.

It is found in the cytoplasm. One of several proteins that assist in the late maturation steps of the functional core of the 30S ribosomal subunit. Associates with free 30S ribosomal subunits (but not with 30S subunits that are part of 70S ribosomes or polysomes). Required for efficient processing of 16S rRNA. May interact with the 5'-terminal helix region of 16S rRNA. The polypeptide is Ribosome-binding factor A (Clostridium tetani (strain Massachusetts / E88)).